The sequence spans 338 residues: Homeobox protein ceh-20 (338 aa).

The region spanning 4-187 (THPANLSELL…VMILRSRFLD (184 aa)) is the PBC domain. The interval 11 to 91 (ELLDAVLKIN…EGVAGPDKGG (81 aa)) is PBC-A. The segment at 94–187 (GSDASGGDQA…VMILRSRFLD (94 aa)) is PBC-B. Positions 188 to 250 (ARRKRRNFSK…NKRIRYKKNM (63 aa)) form a DNA-binding region, homeobox; TALE-type.

The protein belongs to the TALE/PBX homeobox family. In terms of assembly, interacts with Meis protein psa-3. Interacts with homeobox protein nob-1. In terms of tissue distribution, expressed in head dopaminergic neurons.

It localises to the nucleus. Transcription factor that binds to the 5'-TGATNNAT(G/T)(G/A)-3' PBC/Hox lineage enhancer region of sem-2 to promote cell fate specification in the postembryonic mesoderm (also known as the M lineage). Required for the M lineage-specific expression of the transcription factor, mls-2. Required for asymmetric division of the T hypodermal cell, probably acting via the regulation of asymmetric expression of Meis protein psa-3 in concert with homeobox protein nob-1 and the Wnt-MAPK pathway. Has a role in the mig-13 pathway to promote the guidance, migration and positioning of Q neuroblasts and their descendants along the anteroposterior body axis and the anterior migration of BDU interneurons. Also required for normal vulval formation. Plays a role in regulating gene expression in dopaminergic neurons, acting in midbody PDE neurons, and acting redundantly with ceh-40 in head neurons. May activate dopamine pathway genes in concert with ETS domain-containing protein ast-1, and homeobox proteins ceh-43 and ceh-40. The protein is Homeobox protein ceh-20 of Caenorhabditis elegans.